A 437-amino-acid polypeptide reads, in one-letter code: Probable eukaryotic translation initiation factor 5-2 (437 aa).

GTP is bound at residue 29 to 36 (GKGNGIKT). Composition is skewed to basic and acidic residues over residues 148–179 (EQKKVSKDKKAMRKAEKERLKEGELADEEQRK) and 191–212 (KDSKTSKNHSSDEDISPKHDEN). 2 disordered regions span residues 148–231 (EQKK…WQTD) and 262–284 (EKKAPKSKSNGNVVKTENPPPQE). The residue at position 201 (S201) is a Phosphoserine; by CK2. The span at 213-226 (ALEVDEDEDDDDGV) shows a compositional bias: acidic residues. T230 is modified (phosphothreonine; by CK2). The W2 domain maps to 278–436 (ENPPPQEKNL…QSAESESEEE (159 aa)). S428, S431, and S433 each carry phosphoserine; by CK2.

The protein belongs to the eIF-2-beta/eIF-5 family. In terms of processing, phosphorylated at Ser-201, Thr-230, Ser-428, Ser-431, and Ser-433 by CK2.

Catalyzes the hydrolysis of GTP bound to the 40S ribosomal initiation complex (40S.mRNA.Met-tRNA[F].eIF-2.GTP) with the subsequent joining of a 60S ribosomal subunit resulting in the release of eIF-2 and the guanine nucleotide. The subsequent joining of a 60S ribosomal subunit results in the formation of a functional 80S initiation complex (80S.mRNA.Met-tRNA[F]). In Arabidopsis thaliana (Mouse-ear cress), this protein is Probable eukaryotic translation initiation factor 5-2.